A 144-amino-acid polypeptide reads, in one-letter code: (R)-specific enoyl-CoA hydratase (144 aa).

One can recognise a MaoC-like domain in the interval 13 to 128 (DIKEGQSASL…TFRTTCTVAG (116 aa)).

Homotetramer.

The enzyme catalyses a (3R)-3-hydroxyacyl-CoA = a (2E)-enoyl-CoA + H2O. Functionally, catalyzes the hydration of trans-2-enoyl-CoAs with a chain-length of 4-6 carbon atoms, forming the corresponding (3R)-3-hydroxyacyl-CoAs, which can then be utilized for the production of polyhydroxyalkanoates (PHA) polymers. Cannot use trans-2,3-octenoyl-CoA as substrate. This is (R)-specific enoyl-CoA hydratase from Rhodospirillum rubrum (strain ATCC 11170 / ATH 1.1.1 / DSM 467 / LMG 4362 / NCIMB 8255 / S1).